The primary structure comprises 170 residues: Putative pre-16S rRNA nuclease (170 aa).

The tract at residues 1 to 29 is disordered; that stretch reads MVAASHRSPDRPGDPEGLEPGTGRGRRLG.

Belongs to the YqgF nuclease family.

It is found in the cytoplasm. Could be a nuclease involved in processing of the 5'-end of pre-16S rRNA. The protein is Putative pre-16S rRNA nuclease of Mycobacterium ulcerans (strain Agy99).